Reading from the N-terminus, the 113-residue chain is Defense protein 2 (113 aa).

The protein belongs to the attacin/sarcotoxin-2 family.

It localises to the secreted. Functionally, has antibacterial activity against both Gram-positive and Gram-negative bacteria. This is Defense protein 2 from Lonomia obliqua (Moth).